Consider the following 158-residue polypeptide: SsrA-binding protein (158 aa).

Positions 135 to 158 are disordered; it reads DKRKTLKDRDWERDKQRGFKKDLD. Positions 141-158 are enriched in basic and acidic residues; it reads KDRDWERDKQRGFKKDLD.

It belongs to the SmpB family.

It is found in the cytoplasm. Its function is as follows. Required for rescue of stalled ribosomes mediated by trans-translation. Binds to transfer-messenger RNA (tmRNA), required for stable association of tmRNA with ribosomes. tmRNA and SmpB together mimic tRNA shape, replacing the anticodon stem-loop with SmpB. tmRNA is encoded by the ssrA gene; the 2 termini fold to resemble tRNA(Ala) and it encodes a 'tag peptide', a short internal open reading frame. During trans-translation Ala-aminoacylated tmRNA acts like a tRNA, entering the A-site of stalled ribosomes, displacing the stalled mRNA. The ribosome then switches to translate the ORF on the tmRNA; the nascent peptide is terminated with the 'tag peptide' encoded by the tmRNA and targeted for degradation. The ribosome is freed to recommence translation, which seems to be the essential function of trans-translation. This Psychrobacter arcticus (strain DSM 17307 / VKM B-2377 / 273-4) protein is SsrA-binding protein.